Here is a 431-residue protein sequence, read N- to C-terminus: MSLMTKLGFRALVASCLIAAGGAANAQVNVLITGVGSTQFPIATANFANEAGLPQQVTSIVRADLARSGKFTNIDAGSTPVPETASVDLGAWKAKGANAFVAGSVNREANGQYKVNFILYDTVKQQSLGGLSLTANDTTLRTAGHKIADYIYQKLLGVRGVFATRLSYVIKTGNRYQLQISDSDGQNARIALSSTEPIISPAWSPSGTKVAYVSFERKKPIVYIHDLPTGRRYMVSDQKGNNSAPAWSPDGNTLAVALSLTGNTQIYTVNANGGGLRRLTQSSSIDTEPFYSPDGHWIYFTSDRGGAPQIYRMPAQGESAGAAQRVTFTGSYNTSPRVSPDGKLLAYISRTGGGFKLYVQDLQTGAANAITNTNRDESPSFAANGQYILYATQSGGRNVLAAVPTDGSAPPQILSVQGGSVREPSWGPFMQ.

The first 26 residues, 1 to 26 (MSLMTKLGFRALVASCLIAAGGAANA), serve as a signal peptide directing secretion. Residues 411 to 431 (PQILSVQGGSVREPSWGPFMQ) form a disordered region.

It belongs to the TolB family. The Tol-Pal system is composed of five core proteins: the inner membrane proteins TolA, TolQ and TolR, the periplasmic protein TolB and the outer membrane protein Pal. They form a network linking the inner and outer membranes and the peptidoglycan layer.

Its subcellular location is the periplasm. In terms of biological role, part of the Tol-Pal system, which plays a role in outer membrane invagination during cell division and is important for maintaining outer membrane integrity. This chain is Tol-Pal system protein TolB, found in Burkholderia vietnamiensis (strain G4 / LMG 22486) (Burkholderia cepacia (strain R1808)).